The following is a 377-amino-acid chain: MAKRDCYEVLGISRDATEKEVKKAYKRLAMKYHPDRTSGNDELEVKFKEVKEAYEILNDSQKKAAYDQYGHDGVNQQGRGGFDNSDFGDQFGDIFGDIFGGGRRGGGGGGQRPQQGSDLRYNMELTLEEAVRGISKEIQIPTQVHCEQCNGSGAKKGTEAKTCGTCYGQGQVQMRQGFFAVNQACPTCRGQGKIISDPCHKCHGHGRYERSKNMSVKIPAGVDTGDRIRLSGEGEAGEHGGPAGDLYVQMNVLPHHVFERDGNNLHCEVPISFTEAALGSEIEVPTLDGRVKLKIPAETQTGRVFRMRNKGVKSVRSHATGDLMCKVMVETPVKLSSKQRDLLKEFETLCSSSSTKHKPKSEGFLTSIKTFFDDLSS.

In terms of domain architecture, J spans 5–70 (DCYEVLGISR…QKKAAYDQYG (66 aa)). The CR-type zinc finger occupies 133 to 211 (GISKEIQIPT…CHGHGRYERS (79 aa)). Residues cysteine 146, cysteine 149, cysteine 163, cysteine 166, cysteine 185, cysteine 188, cysteine 199, and cysteine 202 each coordinate Zn(2+). CXXCXGXG motif repeat units follow at residues 146–153 (CEQCNGSG), 163–170 (CGTCYGQG), 185–192 (CPTCRGQG), and 199–206 (CHKCHGHG).

It belongs to the DnaJ family. As to quaternary structure, homodimer. Zn(2+) is required as a cofactor.

It is found in the cytoplasm. Its function is as follows. Participates actively in the response to hyperosmotic and heat shock by preventing the aggregation of stress-denatured proteins and by disaggregating proteins, also in an autonomous, DnaK-independent fashion. Unfolded proteins bind initially to DnaJ; upon interaction with the DnaJ-bound protein, DnaK hydrolyzes its bound ATP, resulting in the formation of a stable complex. GrpE releases ADP from DnaK; ATP binding to DnaK triggers the release of the substrate protein, thus completing the reaction cycle. Several rounds of ATP-dependent interactions between DnaJ, DnaK and GrpE are required for fully efficient folding. Also involved, together with DnaK and GrpE, in the DNA replication of plasmids through activation of initiation proteins. In Psychromonas ingrahamii (strain DSM 17664 / CCUG 51855 / 37), this protein is Chaperone protein DnaJ.